Consider the following 326-residue polypeptide: MEDKRKRRAATLSTALILFVACCVYTLYIFKFDNPRLSPPVSLLPTISTLKKIEHVTDLNKEYVFVGDVHGNYDEFIELIDDKIGGLGENITMILLGDFIHKGPDSDKVVSYILNHKDQVKCVLGNHEILVMMAYLNPDFSKWVRRPKLMTPLTFSTETNFIPQDISKISNAHGRLARELGFSKLSQLAEHCSMAIELDLDITGDILFGAHAGMVPGDFMKPNQIPGVSSLSNMKYVDKKNWSKTSREKENKNYVRWYTLWDKYGDHFSNAKVFYGHDASMGLNLRRQTKGLDTACIKNNLLSSMKVKYDIKKGQYDYELIQVQCS.

Residues 1-9 are Cytoplasmic-facing; that stretch reads MEDKRKRRA. Residues 10–30 traverse the membrane as a helical segment; the sequence is ATLSTALILFVACCVYTLYIF. At 31-326 the chain is on the vacuolar side; the sequence is KFDNPRLSPP…DYELIQVQCS (296 aa). N-linked (GlcNAc...) asparagine glycans are attached at residues Asn90 and Asn241.

Belongs to the metallophosphoesterase superfamily. As to quaternary structure, interacts with PPN1. The cofactor is Zn(2+). Requires Co(2+) as cofactor. Mg(2+) is required as a cofactor.

Its subcellular location is the vacuole membrane. The enzyme catalyses [phosphate](n+1) + n H2O = (n+1) phosphate + n H(+). With respect to regulation, not sensitive to heparin inhibition. Functionally, catalyzes the hydrolysis of inorganic polyphosphate (polyP) chains of many hundreds of phosphate residues into shorter lengths. Exclusively shows endopolyphosphatase activity, cleaving inside the polyP chain. Together with PPN1, responsible for a substantial fraction of polyphosphatase activity that is necessary to mobilize polyP stores in response to phosphate scarcity. The sequence is that of Zinc-dependent endopolyphosphatase from Saccharomyces cerevisiae (strain ATCC 204508 / S288c) (Baker's yeast).